We begin with the raw amino-acid sequence, 160 residues long: SsrA-binding protein (160 aa).

The disordered stretch occupies residues 1-23 (MARKKKQDKGQGPKTIAQNRRAR).

It belongs to the SmpB family.

It localises to the cytoplasm. Required for rescue of stalled ribosomes mediated by trans-translation. Binds to transfer-messenger RNA (tmRNA), required for stable association of tmRNA with ribosomes. tmRNA and SmpB together mimic tRNA shape, replacing the anticodon stem-loop with SmpB. tmRNA is encoded by the ssrA gene; the 2 termini fold to resemble tRNA(Ala) and it encodes a 'tag peptide', a short internal open reading frame. During trans-translation Ala-aminoacylated tmRNA acts like a tRNA, entering the A-site of stalled ribosomes, displacing the stalled mRNA. The ribosome then switches to translate the ORF on the tmRNA; the nascent peptide is terminated with the 'tag peptide' encoded by the tmRNA and targeted for degradation. The ribosome is freed to recommence translation, which seems to be the essential function of trans-translation. The sequence is that of SsrA-binding protein from Thermobifida fusca (strain YX).